Here is a 574-residue protein sequence, read N- to C-terminus: Cytochrome P450 4g15 (574 aa).

The interval 288–327 (REREQNGGVDQTPSTAGSDEKDREKDKEKASPVAGLSYGQ) is disordered. Positions 295-304 (GVDQTPSTAG) are enriched in polar residues. The segment covering 305-317 (SDEKDREKDKEKA) has biased composition (basic and acidic residues). 2 residues coordinate heme: Glu379 and Cys519.

Belongs to the cytochrome P450 family. Heme serves as cofactor. As to expression, expressed in larval brain cortex cells and ring glands and weakly in larval digestive system and adult nervous system.

It localises to the endoplasmic reticulum membrane. It is found in the microsome membrane. Its function is as follows. Probably involved in steroid hormones biosynthesis. This is Cytochrome P450 4g15 (Cyp4g15) from Drosophila melanogaster (Fruit fly).